Here is a 315-residue protein sequence, read N- to C-terminus: Calcium homeostasis modulator protein 4 (315 aa).

The Cytoplasmic segment spans residues 1 to 14; the sequence is MSPDLNCISSSLLR. A helical transmembrane segment spans residues 15-37; sequence SEPCINSLIAILTVCGQQLFSSY. The Extracellular portion of the chain corresponds to 38-48; that stretch reads TFSCPCQVGKN. 2 cysteine pairs are disulfide-bonded: Cys41/Cys132 and Cys43/Cys163. The chain crosses the membrane as a helical span at residues 49-71; it reads FYYGSAFLVVPALILLIAGYALR. Residues 72–104 are Cytoplasmic-facing; the sequence is GQMWTVASEYCCCSCTPPYRRSSPLERRLACLM. The helical transmembrane segment at 105–130 threads the bilayer; it reads FFDITGRALVAPLTWLTVTLLTGTYY. Residues 131-184 are Extracellular-facing; that stretch reads ECAASEFASVDQYPMFANVTPSKREEMLAGFPCYTSAPSDVIPIRDEVALLHRY. The chain crosses the membrane as a helical span at residues 185 to 208; that stretch reads QSQMLGWILVVLATIALLLSKCLA. The Cytoplasmic segment spans residues 209–315; the sequence is RCCSPLTSLQ…DRQEGIEMKP (107 aa).

This sequence belongs to the CALHM family. Oligomerizes to form decameric and undecameric channels. Two hemichannels can assemble in a tail-to-tail manner to form a gap junction.

The protein resides in the cell membrane. Its function is as follows. May assemble to form gap junction channel-like structures involved in intercellular communication. Channel gating and ion conductance are likely regulated by membrane lipids rather than by membrane depolarization or extracellular calcium levels. The chain is Calcium homeostasis modulator protein 4 from Mus musculus (Mouse).